The chain runs to 552 residues: Phosphoglucomutase (552 aa).

S135 functions as the Phosphoserine intermediate in the catalytic mechanism. Mg(2+) contacts are provided by S135, D289, D291, and D293.

This sequence belongs to the phosphohexose mutase family. Requires Mg(2+) as cofactor.

It catalyses the reaction alpha-D-glucose 1-phosphate = alpha-D-glucose 6-phosphate. The protein operates within glycolipid metabolism; diglucosyl-diacylglycerol biosynthesis. In terms of biological role, catalyzes the interconversion between glucose-6-phosphate and alpha-glucose-1-phosphate. This is the first step in the biosynthesis of diglucosyl-diacylglycerol (Glc2-DAG), i.e. a glycolipid found in the membrane, which is also used as a membrane anchor for lipoteichoic acid (LTA). In Staphylococcus saprophyticus subsp. saprophyticus (strain ATCC 15305 / DSM 20229 / NCIMB 8711 / NCTC 7292 / S-41), this protein is Phosphoglucomutase (pgcA).